The sequence spans 541 residues: Glutamyl-tRNA(Gln) amidotransferase subunit B, mitochondrial (541 aa).

This sequence belongs to the GatB/GatE family. GatB subfamily. Subunit of the heterotrimeric GatFAB amidotransferase (AdT) complex, composed of A (HER2), B (PET112) and F (YGR102C) subunits.

It is found in the mitochondrion. It carries out the reaction L-glutamyl-tRNA(Gln) + L-glutamine + ATP + H2O = L-glutaminyl-tRNA(Gln) + L-glutamate + ADP + phosphate + H(+). Allows the formation of correctly charged Gln-tRNA(Gln) through the transamidation of misacylated Glu-tRNA(Gln) in the mitochondria. The reaction takes place in the presence of glutamine and ATP through an activated gamma-phospho-Glu-tRNA(Gln). This chain is Glutamyl-tRNA(Gln) amidotransferase subunit B, mitochondrial, found in Saccharomyces cerevisiae (strain ATCC 204508 / S288c) (Baker's yeast).